Consider the following 509-residue polypeptide: uncharacterized protein (509 aa).

The RNase NYN domain maps to 358–480 (RRIVIIDAIS…IIPFIVENGE (123 aa)).

This is an uncharacterized protein from Methanocaldococcus jannaschii (strain ATCC 43067 / DSM 2661 / JAL-1 / JCM 10045 / NBRC 100440) (Methanococcus jannaschii).